The chain runs to 341 residues: Oxidoreductase swnN (341 aa).

Belongs to the NmrA-type oxidoreductase family. Isoflavone reductase subfamily.

It participates in mycotoxin biosynthesis. Its function is as follows. Oxidoreductase; part of the gene cluster that mediates the biosynthesis of swainsonine (SW), a cytotoxic fungal alkaloid and a potential cancer therapy drug. Swainsonine production occurs via a multibranched pathway and is dispensable for fungal colonization of plants and infection of insect hosts. The first step of swainsonine biosynthesis is the production of the precursor pipecolic acid (PA) via conversion of L-lysine (Lys) to 1-piperideine-6-carboxylate (P6C) by the aminotransferase swnA, the latter being further reduced to PA by the reductase swnR. PA can be converted from lysine by both the SW biosynthetic cluster and the unclustered genes such as lysine cyclodeaminase. The PKS-NRPS hybrid synthetase swnK uptakes and condensates PA and malonyl-CoA with and without skipping of the ketoreductase (KR) domain in order to produce 3 intermediates, 1-oxoindolizidine, (1S)-1-hydroxyindolizin, and (1R)-1-hydroxyindolizine; with the transisomer (1S)-1-hydroxyindolizin being predominant. The terminal thioester reductase (TE) domain of swnK is involved in reduction of the thioester bond to release the intermediate aldehydes. The oxidoreductase swnN could contribute to the reduction of 1-oxoindolizidine to (1S)-1-hydroxyindolizin and (1R)-1-hydroxyindolizine, contributing to the major route of SW production. The dioxygenase swnH2 would be responsible for the oxidization of (1R)-1-hydroxyindolizine into (1R,2S)-1,2-dihydroxyindolizine and of (1S)-1-hydroxyindolizin to yield both (1R,2S)-1,2-dihydroxyindolizine and (1S,2S)-1,2-dihydroxyindolizine. The dioxygenase swnH1 then performs the conversion of the 1,2-dihydroxyindolizine epimers to SW. This chain is Oxidoreductase swnN, found in Metarhizium robertsii (strain ARSEF 23 / ATCC MYA-3075) (Metarhizium anisopliae (strain ARSEF 23)).